The sequence spans 553 residues: Heterochromatin protein 1-binding protein 3 (553 aa).

Ala2 is subject to N-acetylalanine. A Phosphoserine modification is found at Ser6. The disordered stretch occupies residues 30–131 (LGEKADDSTM…SKEKEKKVKK (102 aa)). Thr51 bears the Phosphothreonine mark. The segment covering 60–71 (GEEEKPEPDGSS) has biased composition (acidic residues). Lys64 participates in a covalent cross-link: Glycyl lysine isopeptide (Lys-Gly) (interchain with G-Cter in SUMO2). A Phosphothreonine modification is found at Thr85. The segment covering 91 to 127 (REAEQPKGEPESGEKEESKSAEETKKEEKDQSKEKEK) has biased composition (basic and acidic residues). Lys97 is covalently cross-linked (Glycyl lysine isopeptide (Lys-Gly) (interchain with G-Cter in SUMO2)). Phosphoserine is present on residues Ser142, Ser155, and Ser156. Residues 157–232 (PRPKMDAILT…GASGSFVVVQ (76 aa)) enclose the H15 1 domain. Lys190 carries the post-translational modification N6-acetyllysine. The tract at residues 231–251 (VQKSKTPQKSKNRKKGSAVDP) is disordered. Over residues 236 to 246 (TPQKSKNRKKG) the composition is skewed to basic residues. Position 247 is a phosphoserine (Ser247). The short motif at 253–257 (PQVKL) is the PxVxL motif element. H15 domains are found at residues 253 to 328 (PQVK…QLKK) and 335 to 411 (LGGS…QLCF). Lys256 participates in a covalent cross-link: Glycyl lysine isopeptide (Lys-Gly) (interchain with G-Cter in SUMO2). Residues 422 to 553 (PKKVSDGSED…MKKKSFKTKK (132 aa)) form a disordered region. Residues 428–449 (GSEDEDEEEDEEESSEDSEDEE) are compositionally biased toward acidic residues. 3 positions are modified to phosphoserine: Ser441, Ser442, and Ser445. 2 stretches are compositionally biased toward basic residues: residues 488-509 (GKVRPLPKKAPPKAKTPARKGR) and 542-553 (SAMKKKSFKTKK).

Interacts (via PxVxL motif) with CBX5.

The protein localises to the nucleus. The protein resides in the chromosome. Component of heterochromatin that maintains heterochromatin integrity during G1/S progression and regulates the duration of G1 phase to critically influence cell proliferative capacity. May play a role in hypoxia-induced oncogenesis. This chain is Heterochromatin protein 1-binding protein 3 (Hp1bp3), found in Rattus norvegicus (Rat).